We begin with the raw amino-acid sequence, 89 residues long: Small ribosomal subunit protein uS15 (89 aa).

It belongs to the universal ribosomal protein uS15 family. As to quaternary structure, part of the 30S ribosomal subunit. Forms a bridge to the 50S subunit in the 70S ribosome, contacting the 23S rRNA.

Functionally, one of the primary rRNA binding proteins, it binds directly to 16S rRNA where it helps nucleate assembly of the platform of the 30S subunit by binding and bridging several RNA helices of the 16S rRNA. Forms an intersubunit bridge (bridge B4) with the 23S rRNA of the 50S subunit in the ribosome. The sequence is that of Small ribosomal subunit protein uS15 from Streptococcus pneumoniae (strain P1031).